Reading from the N-terminus, the 137-residue chain is Large ribosomal subunit protein uL16 (137 aa).

The protein belongs to the universal ribosomal protein uL16 family. Part of the 50S ribosomal subunit.

Binds 23S rRNA and is also seen to make contacts with the A and possibly P site tRNAs. This is Large ribosomal subunit protein uL16 from Aromatoleum aromaticum (strain DSM 19018 / LMG 30748 / EbN1) (Azoarcus sp. (strain EbN1)).